Consider the following 199-residue polypeptide: Desiccation stress protein DSP-22, chloroplastic (199 aa).

The N-terminal 52 residues, Met1–Met52, are a transit peptide targeting the chloroplast. The span at Arg53–Gln62 shows a compositional bias: basic and acidic residues. Residues Arg53–Glu82 are disordered. 2 helical membrane-spanning segments follow: residues Phe130–Ile152 and Ile172–Val191.

This sequence belongs to the ELIP/psbS family. As to expression, preferentially localized in the chloroplast-rich palisade parenchyma cells, in extracts of desiccated leaves, in seeds, but not in roots or untreated leaves.

It is found in the plastid. The protein resides in the chloroplast thylakoid membrane. Its function is as follows. Possibly exerts a protective role during water loss. This chain is Desiccation stress protein DSP-22, chloroplastic (DSP-22), found in Craterostigma plantagineum (Blue gem).